The primary structure comprises 192 residues: 3-hydroxyanthranilate 3,4-dioxygenase (192 aa).

An O2-binding site is contributed by R50. Fe cation contacts are provided by H54, E60, and H102. Residue E60 participates in substrate binding. 2 residues coordinate substrate: R106 and E116. Residues C131, C134, C168, and C171 each contribute to the a divalent metal cation site.

It belongs to the 3-HAO family. Fe(2+) serves as cofactor.

Its subcellular location is the cytoplasm. It carries out the reaction 3-hydroxyanthranilate + O2 = (2Z,4Z)-2-amino-3-carboxymuconate 6-semialdehyde. The protein operates within cofactor biosynthesis; NAD(+) biosynthesis; quinolinate from L-kynurenine: step 3/3. Catalyzes the oxidative ring opening of 3-hydroxyanthranilate to 2-amino-3-carboxymuconate semialdehyde, which spontaneously cyclizes to quinolinate. The chain is 3-hydroxyanthranilate 3,4-dioxygenase (bna1) from Neosartorya fischeri (strain ATCC 1020 / DSM 3700 / CBS 544.65 / FGSC A1164 / JCM 1740 / NRRL 181 / WB 181) (Aspergillus fischerianus).